The following is a 779-amino-acid chain: Probable ATP-dependent RNA helicase DHX40 (779 aa).

The tract at residues 1-53 is disordered; it reads MSRFPAVAGRAPRRQEEGERPVELQEERPSAVRIADREEKGCTSQEGGTTPTF. The span at 13–41 shows a compositional bias: basic and acidic residues; that stretch reads RRQEEGERPVELQEERPSAVRIADREEKG. Polar residues predominate over residues 42–53; the sequence is CTSQEGGTTPTF. Positions 63–231 constitute a Helicase ATP-binding domain; sequence IQAVRDNSFL…FGNCPIFDIP (169 aa). 76–83 is a binding site for ATP; the sequence is GNTGSGKT. A DEAH box motif is present at residues 173 to 176; it reads DEAH. In terms of domain architecture, Helicase C-terminal spans 263 to 442; that stretch reads TMDIHLNEMA…SVVLTLKCLA (180 aa).

This sequence belongs to the DEAD box helicase family. DEAH subfamily.

The catalysed reaction is ATP + H2O = ADP + phosphate + H(+). Functionally, probable ATP-dependent RNA helicase. The protein is Probable ATP-dependent RNA helicase DHX40 (Dhx40) of Rattus norvegicus (Rat).